Here is a 376-residue protein sequence, read N- to C-terminus: Glutamate 5-kinase (376 aa).

Lysine 18 contacts ATP. Serine 58, aspartate 145, and asparagine 157 together coordinate substrate. Residues 177-178 (SD) and 218-224 (TGGMASK) each bind ATP. The region spanning 280–358 (TGALTLDAGA…SELPGELRRP (79 aa)) is the PUA domain.

The protein belongs to the glutamate 5-kinase family.

The protein localises to the cytoplasm. The catalysed reaction is L-glutamate + ATP = L-glutamyl 5-phosphate + ADP. It participates in amino-acid biosynthesis; L-proline biosynthesis; L-glutamate 5-semialdehyde from L-glutamate: step 1/2. Catalyzes the transfer of a phosphate group to glutamate to form L-glutamate 5-phosphate. This chain is Glutamate 5-kinase, found in Mycobacterium tuberculosis (strain CDC 1551 / Oshkosh).